The following is a 591-amino-acid chain: MDASVGENPVAQSIAQAMIEGFNKHYRIFRETSRRAKESFEAAEWQAQIDAVRERVQFYDERVDEAVRRLHEEFDADSLDDSTWQQLKLQYIGILMRHKQPELAETFFNSVCCKILHRTYFNNDYLFARPAVSTEYIESYPPVYSSYYPQDEGLRTTVRRIIEDFDWQRPFANLDRDIDNILRAVHEHIGAWPDMEVNCQIQVLYSAFYRNKTAYIIGKAINGYQEYPFALAVRHNPAGRLEADTILLDPWRISVLFSLSRAYFLVDMEVPSGYVHFLRSIMPNKHRSELYTMLGLGKQGKTMFFRDLIAHLRHSNDQFIIAPGIRGLVMLVFTLPSYPYVFKIIKDVFGASKNMDRATVKRKYLMVKQVDRVGRLADTLEFSYAALPLSRFHPELLDELRALAPSSFEIEGDSVIIKHLYIERRMTPLNIYLEHADDDQVEYAVREYGNAIRELATANIFPGDMLWKNFGVTRYGRVVFYDYDEIEFMTAMNFRRIPPAPYPEMEMAAEPWYSAGPMDVFPEEFATFLLGAPRVRKAFLKHHRDLLDAKFWQDVQASIRKGYLEDFFPYPTELRFCNMWSNERGRAHQAA.

ATP-binding positions include 322–328 (APGIRGL) and Lys-343. Residue Asp-378 is part of the active site.

The protein belongs to the AceK family.

Its subcellular location is the cytoplasm. It catalyses the reaction L-seryl-[isocitrate dehydrogenase] + ATP = O-phospho-L-seryl-[isocitrate dehydrogenase] + ADP + H(+). In terms of biological role, bifunctional enzyme which can phosphorylate or dephosphorylate isocitrate dehydrogenase (IDH) on a specific serine residue. This is a regulatory mechanism which enables bacteria to bypass the Krebs cycle via the glyoxylate shunt in response to the source of carbon. When bacteria are grown on glucose, IDH is fully active and unphosphorylated, but when grown on acetate or ethanol, the activity of IDH declines drastically concomitant with its phosphorylation. This Aromatoleum aromaticum (strain DSM 19018 / LMG 30748 / EbN1) (Azoarcus sp. (strain EbN1)) protein is Isocitrate dehydrogenase kinase/phosphatase.